We begin with the raw amino-acid sequence, 356 residues long: sn-glycerol-3-phosphate import ATP-binding protein UgpC (356 aa).

Residues 4–235 (LKLQAVTKSW…PASRFVASFI (232 aa)) enclose the ABC transporter domain. Residue 37 to 44 (GPSGCGKS) participates in ATP binding.

It belongs to the ABC transporter superfamily. sn-glycerol-3-phosphate importer (TC 3.A.1.1.3) family. In terms of assembly, the complex is composed of two ATP-binding proteins (UgpC), two transmembrane proteins (UgpA and UgpE) and a solute-binding protein (UgpB).

Its subcellular location is the cell inner membrane. It catalyses the reaction sn-glycerol 3-phosphate(out) + ATP + H2O = sn-glycerol 3-phosphate(in) + ADP + phosphate + H(+). Functionally, part of the ABC transporter complex UgpBAEC involved in sn-glycerol-3-phosphate (G3P) import. Responsible for energy coupling to the transport system. The protein is sn-glycerol-3-phosphate import ATP-binding protein UgpC of Salmonella choleraesuis (strain SC-B67).